A 549-amino-acid polypeptide reads, in one-letter code: Cytoplasmic trehalase (549 aa).

Residues R168, W175–D176, N212, R221–Q223, R292–E294, and G324 each bind substrate. Residues D326 and E509 each act as proton donor/acceptor in the active site. Residue E525 participates in substrate binding.

The protein belongs to the glycosyl hydrolase 37 family. As to quaternary structure, monomer.

Its subcellular location is the cytoplasm. The enzyme catalyses alpha,alpha-trehalose + H2O = alpha-D-glucose + beta-D-glucose. The protein operates within glycan degradation; trehalose degradation; D-glucose from alpha,alpha-trehalose: step 1/1. Functionally, hydrolyzes trehalose to glucose. Could be involved, in cells returning to low osmolarity conditions, in the utilization of the accumulated cytoplasmic trehalose, which was synthesized in response to high osmolarity. In Escherichia fergusonii (strain ATCC 35469 / DSM 13698 / CCUG 18766 / IAM 14443 / JCM 21226 / LMG 7866 / NBRC 102419 / NCTC 12128 / CDC 0568-73), this protein is Cytoplasmic trehalase.